Here is a 154-residue protein sequence, read N- to C-terminus: Probable ubiquitin-conjugating enzyme E2 31 (154 aa).

Positions 8-153 (KAAQRIAMEY…AREFTARHAN (146 aa)) constitute a UBC core domain. Catalysis depends on C91, which acts as the Glycyl thioester intermediate.

Belongs to the ubiquitin-conjugating enzyme family.

The enzyme catalyses S-ubiquitinyl-[E1 ubiquitin-activating enzyme]-L-cysteine + [E2 ubiquitin-conjugating enzyme]-L-cysteine = [E1 ubiquitin-activating enzyme]-L-cysteine + S-ubiquitinyl-[E2 ubiquitin-conjugating enzyme]-L-cysteine.. It functions in the pathway protein modification; protein ubiquitination. Accepts the ubiquitin from the E1 complex and catalyzes its covalent attachment to other proteins. This Arabidopsis thaliana (Mouse-ear cress) protein is Probable ubiquitin-conjugating enzyme E2 31 (UBC31).